The following is a 197-amino-acid chain: dTTP/UTP pyrophosphatase (197 aa).

Aspartate 70 serves as the catalytic Proton acceptor.

The protein belongs to the Maf family. YhdE subfamily. Requires a divalent metal cation as cofactor.

Its subcellular location is the cytoplasm. It catalyses the reaction dTTP + H2O = dTMP + diphosphate + H(+). The catalysed reaction is UTP + H2O = UMP + diphosphate + H(+). Nucleoside triphosphate pyrophosphatase that hydrolyzes dTTP and UTP. May have a dual role in cell division arrest and in preventing the incorporation of modified nucleotides into cellular nucleic acids. This chain is dTTP/UTP pyrophosphatase, found in Methanosarcina barkeri (strain Fusaro / DSM 804).